Consider the following 145-residue polypeptide: MEEVTVYKISDRAKLPYKQTSYSAGYDLYSAYDYVIEPMNKELIKTDIILKIPNGYYGRIAPRSGLAYNYFIDVGAGVIDSDYRGNVGVLLFNFGSTQFNVCKGDRIAQIIFEKIAYPKIIEVTTLEEINITDRGNSGFGSTGLK.

It belongs to the dUTPase family. Mg(2+) serves as cofactor.

The catalysed reaction is dUTP + H2O = dUMP + diphosphate + H(+). This enzyme is involved in nucleotide metabolism: it produces dUMP, the immediate precursor of thymidine nucleotides and it decreases the intracellular concentration of dUTP so that uracil cannot be incorporated into DNA. In Fowlpox virus (strain NVSL) (FPV), this protein is Deoxyuridine 5'-triphosphate nucleotidohydrolase (DUT).